A 236-amino-acid polypeptide reads, in one-letter code: Transmembrane protein 70 homolog, mitochondrial (236 aa).

The transit peptide at Met-1–Glu-64 directs the protein to the mitochondrion. Transmembrane regions (helical) follow at residues Met-83–Leu-103 and Val-116–Ile-136.

Belongs to the TMEM70 family. In terms of assembly, associates with mitochondrial complex I assembly intermediates during its biogenesis.

Its subcellular location is the mitochondrion membrane. Its function is as follows. Scaffold protein that participates in the c-ring assembly of mitochondrial ATP synthase (F(1)F(0) ATP synthase or complex V). Also binds the mitochondrial proton-transporting ATP synthase complex I and may play a role in the stability of its membrane-bound subassemblies. The chain is Transmembrane protein 70 homolog, mitochondrial from Drosophila melanogaster (Fruit fly).